The sequence spans 62 residues: Large ribosomal subunit protein bL33 (62 aa).

Belongs to the bacterial ribosomal protein bL33 family.

This is Large ribosomal subunit protein bL33 from Trichodesmium erythraeum (strain IMS101).